Consider the following 1574-residue polypeptide: Plexin-C1 (1574 aa).

An N-terminal signal peptide occupies residues 1–34 (MEVSRRKTPPRPPYPAAPLPLIAYLLALAAPARG). In terms of domain architecture, Sema spans 35 to 452 (ADEPVWRSEQ…AGKEVRRIPV (418 aa)). Over 35–950 (ADEPVWRSEQ…YVEQESVPST (916 aa)) the chain is Extracellular. Cys-64 and Cys-87 are oxidised to a cystine. Asn-86, Asn-143, and Asn-149 each carry an N-linked (GlcNAc...) asparagine glycan. A disulfide bond links Cys-156 and Cys-194. N-linked (GlcNAc...) asparagine glycosylation is present at Asn-252. Cys-283 and Cys-329 are disulfide-bonded. Asn-386 and Asn-407 each carry an N-linked (GlcNAc...) asparagine glycan. 4 cysteine pairs are disulfide-bonded: Cys-455-Cys-472, Cys-461-Cys-506, Cys-464-Cys-481, and Cys-475-Cys-487. N-linked (GlcNAc...) asparagine glycans are attached at residues Asn-694, Asn-773, and Asn-802. Residues 951–971 (WYFLIALPILLAIVIVVAVVV) form a helical membrane-spanning segment. Residues 972–1574 (TRYKSKELSR…FDEKKKCKWM (603 aa)) lie on the Cytoplasmic side of the membrane. Ser-984 is subject to Phosphoserine.

The protein belongs to the plexin family. As to quaternary structure, monomer. Homodimer. Interacts with SEMA7A. As to expression, detected on dendritic cells, skin Langerhans cells and neutrophils (at protein level).

The protein resides in the membrane. Functionally, receptor for SEMA7A, for vaccinia virus semaphorin A39R and for herpesvirus Sema protein. Binding of semaphorins triggers cellular responses leading to the rearrangement of the cytoskeleton and to secretion of IL6 and IL8. This Mus musculus (Mouse) protein is Plexin-C1 (Plxnc1).